Reading from the N-terminus, the 431-residue chain is Histidinol dehydrogenase (431 aa).

Positions 127, 185, and 208 each coordinate NAD(+). Residues Ser234, Gln256, and His259 each coordinate substrate. Residues Gln256 and His259 each coordinate Zn(2+). Residues Glu323 and His324 each act as proton acceptor in the active site. The substrate site is built by His324, Asp357, Glu411, and His416. Asp357 is a binding site for Zn(2+). His416 is a binding site for Zn(2+).

It belongs to the histidinol dehydrogenase family. It depends on Zn(2+) as a cofactor.

It catalyses the reaction L-histidinol + 2 NAD(+) + H2O = L-histidine + 2 NADH + 3 H(+). It participates in amino-acid biosynthesis; L-histidine biosynthesis; L-histidine from 5-phospho-alpha-D-ribose 1-diphosphate: step 9/9. Its function is as follows. Catalyzes the sequential NAD-dependent oxidations of L-histidinol to L-histidinaldehyde and then to L-histidine. The protein is Histidinol dehydrogenase of Vibrio cholerae serotype O1 (strain ATCC 39315 / El Tor Inaba N16961).